We begin with the raw amino-acid sequence, 728 residues long: Ankyrin repeat protein A (728 aa).

ANK repeat units follow at residues 381-410 (INLP…ETGY), 429-458 (NGFS…KLAA), 477-506 (TSSH…LLIR), 525-554 (YGCP…SLAQ), and 573-602 (ARDT…TLFN).

The protein belongs to the Toxin_15 family.

In Escherichia coli (strain K12), this protein is Ankyrin repeat protein A (arpA).